Here is a 291-residue protein sequence, read N- to C-terminus: Release factor glutamine methyltransferase (291 aa).

S-adenosyl-L-methionine-binding positions include 127–131 (GTGSG), D150, W179, and N196. 196–199 (NPPY) contacts substrate.

The protein belongs to the protein N5-glutamine methyltransferase family. PrmC subfamily.

It carries out the reaction L-glutaminyl-[peptide chain release factor] + S-adenosyl-L-methionine = N(5)-methyl-L-glutaminyl-[peptide chain release factor] + S-adenosyl-L-homocysteine + H(+). Functionally, methylates the class 1 translation termination release factors RF1/PrfA and RF2/PrfB on the glutamine residue of the universally conserved GGQ motif. The protein is Release factor glutamine methyltransferase of Thermosynechococcus vestitus (strain NIES-2133 / IAM M-273 / BP-1).